A 450-amino-acid chain; its full sequence is Cyclin-A2-3 (450 aa).

2 disordered regions span residues 18–53 (ALRA…NKRK) and 75–94 (NSKQ…SQLA). Polar residues predominate over residues 23–34 (EVTSTTQNQQRV).

This sequence belongs to the cyclin family. Cyclin AB subfamily. In terms of assembly, interacts with CDKA-1. Interacts with SAMBA.

The protein localises to the nucleus. Negatively regulates endocycles and acts as a regulator of ploidy levels in endoreduplication. Promotes divisions in the guard cells (GCs) after the guard mother cells (GMC) symmetric division. In Arabidopsis thaliana (Mouse-ear cress), this protein is Cyclin-A2-3 (CYCA2-3).